Here is a 904-residue protein sequence, read N- to C-terminus: Trichohyalin-like protein 1 (904 aa).

Residues 48-83 (CVLHAVEKNSNLLNIDSNGIISFDEFVLAIFNLLNL) form the EF-hand domain. Disordered regions lie at residues 102–792 (PEKE…CSVE) and 858–890 (PYTRGLPLDESPAGAQETPAPQALEDKQGHPQR). The segment covering 113–128 (QATTGDGQWTVGTSPT) has biased composition (polar residues). 5 stretches are compositionally biased toward basic and acidic residues: residues 172-185 (ASEHNDPKNKHLEG), 222-240 (TERKGQDKEISQEGDEPAR), 268-300 (ATQRPCEDQEVRTEKEKHSNIQEPPLQREDEPS), 349-371 (NLGEPEDYGRTSETQEKECETKD), and 385-398 (SDMRDERKERRGPE). Over residues 443–452 (ETQYLSSEGG) the composition is skewed to polar residues. Residues 524 to 536 (VEEEDGYQGEDPE) are compositionally biased toward acidic residues. Residues 538-554 (PFTQSDEGSSETPNSLA) are compositionally biased toward polar residues. Low complexity predominate over residues 555 to 578 (SEEGNSSSETGELPVQGDSQSQGD). Residues 586 to 598 (GGHNNNPDTQRQG) are compositionally biased toward polar residues. A compositionally biased stretch (basic and acidic residues) spans 759-770 (GDQKSPAKKEHN). The span at 771–780 (SSVPWSSLEK) shows a compositional bias: polar residues. Basic and acidic residues predominate over residues 881–890 (LEDKQGHPQR).

This sequence belongs to the S-100 family.

The chain is Trichohyalin-like protein 1 (TCHHL1) from Homo sapiens (Human).